A 232-amino-acid polypeptide reads, in one-letter code: Small ribosomal subunit protein uS3 (232 aa).

In terms of domain architecture, KH type-2 spans 39–107; it reads VRQFLIKELA…PAQINIAEVR (69 aa).

Belongs to the universal ribosomal protein uS3 family. In terms of assembly, part of the 30S ribosomal subunit. Forms a tight complex with proteins S10 and S14.

In terms of biological role, binds the lower part of the 30S subunit head. Binds mRNA in the 70S ribosome, positioning it for translation. The sequence is that of Small ribosomal subunit protein uS3 from Serratia proteamaculans (strain 568).